A 1170-amino-acid chain; its full sequence is PAN2-PAN3 deadenylation complex catalytic subunit PAN2 (1170 aa).

WD repeat units follow at residues 104-144 and 280-319; these read ENMK…IIKQ and NISSYVKLFEIAPSGEALVIGDADCNIHLWGSPTKIHFTD. Residues 319 to 458 form a linker region; sequence DMAIPIELPE…DPNEIESLKP (140 aa). The segment at 399 to 459 is disordered; sequence RRNQVEDTRN…PNEIESLKPE (61 aa). Positions 443 to 452 are enriched in acidic residues; sequence VDQEPEDPNE. Residues 459 to 846 form the USP domain; it reads EAPPLYRNLE…MPAVLLFQIK (388 aa). In terms of domain architecture, Exonuclease spans 894–1067; the sequence is VALDTEFVSL…EDARTALKLY (174 aa). A divalent metal cation contacts are provided by Asp897, Glu899, Asp1006, and Asp1059. A disordered region spans residues 1094-1170; sequence NFKPPRREDR…PSKASSPLPK (77 aa). The span at 1098 to 1108 shows a compositional bias: basic and acidic residues; it reads PRREDREKELQ. Residues 1109–1119 show a composition bias toward polar residues; the sequence is RQSTPPNSTAP.

It belongs to the peptidase C19 family. PAN2 subfamily. Forms a heterotrimer with an asymmetric homodimer of the regulatory subunit PAN3 to form the poly(A)-nuclease (PAN) deadenylation complex. The cofactor is a divalent metal cation.

Its subcellular location is the cytoplasm. It carries out the reaction Exonucleolytic cleavage of poly(A) to 5'-AMP.. With respect to regulation, positively regulated by the regulatory subunit PAN3. Catalytic subunit of the poly(A)-nuclease (PAN) deadenylation complex, one of two cytoplasmic mRNA deadenylases involved in mRNA turnover. PAN specifically shortens poly(A) tails of RNA and the activity is stimulated by poly(A)-binding protein PAB1. PAN deadenylation is followed by rapid degradation of the shortened mRNA tails by the CCR4-NOT complex. Deadenylated mRNAs are then degraded by two alternative mechanisms, namely exosome-mediated 3'-5' exonucleolytic degradation, or deadenylation-dependent mRNA decaping and subsequent 5'-3' exonucleolytic degradation by XRN1. May also be involved in post-transcriptional maturation of mRNA poly(A) tails. This chain is PAN2-PAN3 deadenylation complex catalytic subunit PAN2, found in Chaetomium thermophilum (strain DSM 1495 / CBS 144.50 / IMI 039719) (Thermochaetoides thermophila).